We begin with the raw amino-acid sequence, 92 residues long: Small ribosomal subunit protein uS19 (92 aa).

The protein belongs to the universal ribosomal protein uS19 family.

Protein S19 forms a complex with S13 that binds strongly to the 16S ribosomal RNA. This is Small ribosomal subunit protein uS19 from Nitrobacter winogradskyi (strain ATCC 25391 / DSM 10237 / CIP 104748 / NCIMB 11846 / Nb-255).